The following is a 74-amino-acid chain: UPF0352 protein HAPS_0210 (74 aa).

Belongs to the UPF0352 family.

The chain is UPF0352 protein HAPS_0210 from Glaesserella parasuis serovar 5 (strain SH0165) (Haemophilus parasuis).